A 1097-amino-acid polypeptide reads, in one-letter code: Importin-5 (1097 aa).

The residue at position 2 (alanine 2) is an N-acetylalanine. HEAT repeat units follow at residues 5 to 38, 43 to 77, 95 to 122, 130 to 157, 167 to 201, 210 to 246, 254 to 289, 298 to 350, 352 to 386, 390 to 430, 432 to 472, 475 to 523, 525 to 568, 570 to 615, 617 to 692, 695 to 737, 741 to 780, 787 to 853, 856 to 895, 903 to 935, 943 to 983, 990 to 1021, 1032 to 1067, and 1070 to 1093; these read AAEQ…NIPG, TFLL…FDEV, MIIQ…NLID, PEGL…IFWN, QHYL…AAFI, LFKH…IADT, HLEA…LSET, TNIV…ACGL, GKLV…SAIG, HQQM…ATDF, PGFQ…FTED, KSLL…ADTA, EKFV…GLAV, KEKF…CKIL, KEFQ…AKEL, GFVE…ARVR, YLTQ…IEVM, NEHF…FSSY, KVLP…IEHC, AEYF…MAQY, FCTE…MKFK, EEVL…DLIE, NTNL…VVRQ, and TSGG…IQEL. The Importin N-terminal domain maps to 28–99; that stretch reads QAEETYENIP…KSELLMIIQM (72 aa). Residues 325–375 are ran-GTP binding; that stretch reads DELEDDDFDSNAVAGESALDRMACGLGGKLVLPMIKEHIMQMLQNPDWKYR. The residue at position 827 (serine 827) is a Phosphoserine.

It belongs to the importin beta family. Importin beta-3 subfamily. As to quaternary structure, interacts with RPS7 and RPL5. Interacts with RPL23A (via BIB domain). Interacts with H2A, H2B, H3 and H4 histones. Interacts with CPEB3; this mediates CPEB3 nuclear import following neuronal stimulation which enhances the interaction in a RAN-regulated manner. Interacts with AIFM2; this interaction likely mediates the translocation of AIFM2 into the nucleus upon oxidative stress. Interacts with STX3 (isoform 3). Interacts with SRP19. (Microbial infection) Interacts with HIV-1 Rev.

It is found in the cytoplasm. The protein localises to the nucleus. It localises to the nucleolus. Functionally, functions in nuclear protein import as nuclear transport receptor. Serves as receptor for nuclear localization signals (NLS) in cargo substrates. Is thought to mediate docking of the importin/substrate complex to the nuclear pore complex (NPC) through binding to nucleoporin and the complex is subsequently translocated through the pore by an energy requiring, Ran-dependent mechanism. At the nucleoplasmic side of the NPC, Ran binds to the importin, the importin/substrate complex dissociates and importin is re-exported from the nucleus to the cytoplasm where GTP hydrolysis releases Ran. The directionality of nuclear import is thought to be conferred by an asymmetric distribution of the GTP- and GDP-bound forms of Ran between the cytoplasm and nucleus. Mediates the nuclear import of ribosomal proteins RPL23A, RPS7 and RPL5. In vitro, mediates nuclear import of H2A, H2B, H3 and H4 histones. Binds to CPEB3 and mediates its nuclear import following neuronal stimulation. In case of HIV-1 infection, binds and mediates the nuclear import of HIV-1 Rev. The sequence is that of Importin-5 (IPO5) from Homo sapiens (Human).